Reading from the N-terminus, the 121-residue chain is Basic phospholipase A2 daboxin P (121 aa).

7 disulfide bridges follow: Cys26–Cys115, Cys28–Cys44, Cys43–Cys95, Cys49–Cys121, Cys50–Cys88, Cys57–Cys81, and Cys75–Cys86. Tyr27, Gly29, and Gly31 together coordinate Ca(2+). The active site involves His47. Ca(2+) is bound at residue Asp48. Asp89 is a catalytic residue.

Ca(2+) is required as a cofactor. As to expression, expressed by the venom gland.

It localises to the secreted. It catalyses the reaction a 1,2-diacyl-sn-glycero-3-phosphocholine + H2O = a 1-acyl-sn-glycero-3-phosphocholine + a fatty acid + H(+). Snake venom phospholipase A2 (PLA2) that exhibits anticoagulant activity, probably by binding to factor X and its activated form factor Xa (F10). Shows no cytotoxicity. PLA2 catalyzes the calcium-dependent hydrolysis of the 2-acyl groups in 3-sn-phosphoglycerides. The sequence is that of Basic phospholipase A2 daboxin P from Daboia russelii (Russel's viper).